The primary structure comprises 178 residues: Endoribonuclease YbeY (178 aa).

3 residues coordinate Zn(2+): histidine 118, histidine 122, and histidine 128.

This sequence belongs to the endoribonuclease YbeY family. Requires Zn(2+) as cofactor.

Its subcellular location is the cytoplasm. Functionally, single strand-specific metallo-endoribonuclease involved in late-stage 70S ribosome quality control and in maturation of the 3' terminus of the 16S rRNA. This Mycobacterium leprae (strain Br4923) protein is Endoribonuclease YbeY.